The sequence spans 100 residues: NADH-quinone oxidoreductase subunit K (100 aa).

A run of 3 helical transmembrane segments spans residues 4 to 24, 29 to 49, and 60 to 80; these read LSNYLIVSAVLFSIGTIGVLT, IVVFMCIELMLNAVNLTFVAF, and IFVFFIMTVAAAEAAVGLALF.

It belongs to the complex I subunit 4L family. NDH-1 is composed of 14 different subunits. Subunits NuoA, H, J, K, L, M, N constitute the membrane sector of the complex.

Its subcellular location is the cell inner membrane. It carries out the reaction a quinone + NADH + 5 H(+)(in) = a quinol + NAD(+) + 4 H(+)(out). Its function is as follows. NDH-1 shuttles electrons from NADH, via FMN and iron-sulfur (Fe-S) centers, to quinones in the respiratory chain. The immediate electron acceptor for the enzyme in this species is believed to be ubiquinone. Couples the redox reaction to proton translocation (for every two electrons transferred, four hydrogen ions are translocated across the cytoplasmic membrane), and thus conserves the redox energy in a proton gradient. In Trichlorobacter lovleyi (strain ATCC BAA-1151 / DSM 17278 / SZ) (Geobacter lovleyi), this protein is NADH-quinone oxidoreductase subunit K.